The chain runs to 423 residues: UDP-N-acetylglucosamine 1-carboxyvinyltransferase 2 (423 aa).

23 to 24 contributes to the phosphoenolpyruvate binding site; it reads KN. Arg95 is a UDP-N-acetyl-alpha-D-glucosamine binding site. Cys119 serves as the catalytic Proton donor. Residue Cys119 is modified to 2-(S-cysteinyl)pyruvic acid O-phosphothioketal. UDP-N-acetyl-alpha-D-glucosamine contacts are provided by Asp306 and Ile328.

It belongs to the EPSP synthase family. MurA subfamily.

Its subcellular location is the cytoplasm. The catalysed reaction is phosphoenolpyruvate + UDP-N-acetyl-alpha-D-glucosamine = UDP-N-acetyl-3-O-(1-carboxyvinyl)-alpha-D-glucosamine + phosphate. Its pathway is cell wall biogenesis; peptidoglycan biosynthesis. Cell wall formation. Adds enolpyruvyl to UDP-N-acetylglucosamine. The protein is UDP-N-acetylglucosamine 1-carboxyvinyltransferase 2 of Symbiobacterium thermophilum (strain DSM 24528 / JCM 14929 / IAM 14863 / T).